The chain runs to 131 residues: Small ribosomal subunit protein uS11 (131 aa).

It belongs to the universal ribosomal protein uS11 family. As to quaternary structure, part of the 30S ribosomal subunit. Interacts with proteins S7 and S18. Binds to IF-3.

In terms of biological role, located on the platform of the 30S subunit, it bridges several disparate RNA helices of the 16S rRNA. Forms part of the Shine-Dalgarno cleft in the 70S ribosome. The protein is Small ribosomal subunit protein uS11 of Helicobacter acinonychis (strain Sheeba).